A 260-amino-acid polypeptide reads, in one-letter code: Tryptophan synthase alpha chain (260 aa).

Catalysis depends on proton acceptor residues glutamate 52 and aspartate 63.

The protein belongs to the TrpA family. Tetramer of two alpha and two beta chains.

It carries out the reaction (1S,2R)-1-C-(indol-3-yl)glycerol 3-phosphate + L-serine = D-glyceraldehyde 3-phosphate + L-tryptophan + H2O. Its pathway is amino-acid biosynthesis; L-tryptophan biosynthesis; L-tryptophan from chorismate: step 5/5. Its function is as follows. The alpha subunit is responsible for the aldol cleavage of indoleglycerol phosphate to indole and glyceraldehyde 3-phosphate. The chain is Tryptophan synthase alpha chain from Streptococcus mutans serotype c (strain ATCC 700610 / UA159).